Here is a 122-residue protein sequence, read N- to C-terminus: Large ribosomal subunit protein uL14 (122 aa).

It belongs to the universal ribosomal protein uL14 family. In terms of assembly, part of the 50S ribosomal subunit. Forms a cluster with proteins L3 and L19. In the 70S ribosome, L14 and L19 interact and together make contacts with the 16S rRNA in bridges B5 and B8.

In terms of biological role, binds to 23S rRNA. Forms part of two intersubunit bridges in the 70S ribosome. The polypeptide is Large ribosomal subunit protein uL14 (Bdellovibrio bacteriovorus (strain ATCC 15356 / DSM 50701 / NCIMB 9529 / HD100)).